The sequence spans 478 residues: Cytochrome P450 monooxygenase asqL (478 aa).

Position 407 (cysteine 407) interacts with heme.

This sequence belongs to the cytochrome P450 family. Requires heme as cofactor.

The protein operates within secondary metabolite biosynthesis. It participates in alkaloid biosynthesis. It functions in the pathway mycotoxin biosynthesis. Cytochrome P450 monooxygenase; part of the gene cluster that mediates the biosynthesis of the aspoquinolone mycotoxins. The role of asqL within the aspoquinolone pathway has still to be determined. The first step of the pathway is catalyzed by the nonribosomal peptide synthetase asqK that condenses anthranilic acid and O-methyl-L-tyrosine to produce 4'-methoxycyclopeptin. 4'-methoxycyclopeptin is then converted to 4'-methoxydehydrocyclopeptin by the ketoglutarate-dependent dioxygenase asqJ. AsqJ also converts its first product 4'-methoxydehydrocyclopeptin to 4'-methoxycyclopenin. The following conversion of 4'-methoxycyclopenin into 4'-methoxyviridicatin is catalyzed by the cyclopenase asqI. 4'-methoxyviridicatin is the precursor of quinolone natural products, and is further converted to quinolinone B. The prenyltransferase asqH1 then catalyzes the canonical Friedel-Crafts alkylation of quinolinone B with dimethylallyl cation to yield dimethylallyl quinolone, which is subjected to FAD-dependent dehydrogenation by the FAD-linked oxidoreductase asqF to yield conjugated aryl diene. The delta(3') double bond then serves as the site of the second alkylation with DMAPP catalyzed by the prenyltransferase asqH2 to yield a carbenium ion intermediate, which can be attacked by H(2)O to yield a styrenyl quinolone containing a C3'-hydroxyprenyl chain. The FAD-dependent monooxygenase asqG performs epoxidation of the terminal C7'-C8' olefin. Finally, after dehydratation of the epoxide at C3 by asqC, the quinolone epoxide rearrangement protein asqO catalyzes an enzymatic 3-exo-tet cyclization to yield the cyclopropyl-THF ring system in aspoquinolone. The chain is Cytochrome P450 monooxygenase asqL from Emericella nidulans (strain FGSC A4 / ATCC 38163 / CBS 112.46 / NRRL 194 / M139) (Aspergillus nidulans).